The primary structure comprises 130 residues: Peptide methionine sulfoxide reductase MsrB (130 aa).

The MsrB domain maps to 8 to 130; sequence LEEWRSMLDP…NSVCLDLVPR (123 aa). Cys-47, Cys-50, Cys-96, and Cys-99 together coordinate Zn(2+). Cys-119 serves as the catalytic Nucleophile.

It belongs to the MsrB Met sulfoxide reductase family. Zn(2+) serves as cofactor.

The enzyme catalyses L-methionyl-[protein] + [thioredoxin]-disulfide + H2O = L-methionyl-(R)-S-oxide-[protein] + [thioredoxin]-dithiol. The protein is Peptide methionine sulfoxide reductase MsrB of Pseudomonas fluorescens (strain ATCC BAA-477 / NRRL B-23932 / Pf-5).